The primary structure comprises 335 residues: Transaldolase (335 aa).

The residue at position 2 (serine 2) is an N-acetylserine. The Schiff-base intermediate with substrate role is filled by lysine 144.

It belongs to the transaldolase family. Type 1 subfamily. In terms of assembly, homodimer.

The catalysed reaction is D-sedoheptulose 7-phosphate + D-glyceraldehyde 3-phosphate = D-erythrose 4-phosphate + beta-D-fructose 6-phosphate. It participates in carbohydrate degradation; pentose phosphate pathway; D-glyceraldehyde 3-phosphate and beta-D-fructose 6-phosphate from D-ribose 5-phosphate and D-xylulose 5-phosphate (non-oxidative stage): step 2/3. Transaldolase is important for the balance of metabolites in the pentose-phosphate pathway. In Saccharomyces cerevisiae (strain ATCC 204508 / S288c) (Baker's yeast), this protein is Transaldolase (TAL1).